Consider the following 896-residue polypeptide: Translation initiation factor IF-2 (896 aa).

Residues 93–219 show a composition bias toward basic and acidic residues; it reads VKRDPQEAER…RMAEENEKNW (127 aa). The segment at 93 to 307 is disordered; the sequence is VKRDPQEAER…GSALQQGFQK (215 aa). The segment covering 256 to 271 has biased composition (basic residues); that stretch reads GRSRSSKAARPAKKGN. Basic and acidic residues predominate over residues 272-285; that stretch reads KHAESKADREEARA. The tr-type G domain maps to 395–564; sequence PRAPVVTIMG…LLQAEVLELK (170 aa). Residues 404-411 are G1; sequence GHVDHGKT. Residue 404-411 participates in GTP binding; that stretch reads GHVDHGKT. The interval 429-433 is G2; that stretch reads GITQH. The interval 450-453 is G3; sequence DTPG. GTP contacts are provided by residues 450 to 454 and 504 to 507; these read DTPGH and NKID. Residues 504 to 507 are G4; that stretch reads NKID. Positions 540-542 are G5; that stretch reads SAK.

This sequence belongs to the TRAFAC class translation factor GTPase superfamily. Classic translation factor GTPase family. IF-2 subfamily.

It localises to the cytoplasm. Functionally, one of the essential components for the initiation of protein synthesis. Protects formylmethionyl-tRNA from spontaneous hydrolysis and promotes its binding to the 30S ribosomal subunits. Also involved in the hydrolysis of GTP during the formation of the 70S ribosomal complex. The polypeptide is Translation initiation factor IF-2 (Klebsiella pneumoniae subsp. pneumoniae (strain ATCC 700721 / MGH 78578)).